A 356-amino-acid polypeptide reads, in one-letter code: DNA polymerase IV (356 aa).

The region spanning 6–187 is the UmuC domain; sequence IIHIDMDYFF…LDIGDFPGVG (182 aa). Residues D10 and D105 each coordinate Mg(2+). Residue E106 is part of the active site.

It belongs to the DNA polymerase type-Y family. In terms of assembly, monomer. Mg(2+) is required as a cofactor.

Its subcellular location is the cytoplasm. The catalysed reaction is DNA(n) + a 2'-deoxyribonucleoside 5'-triphosphate = DNA(n+1) + diphosphate. Poorly processive, error-prone DNA polymerase involved in untargeted mutagenesis. Copies undamaged DNA at stalled replication forks, which arise in vivo from mismatched or misaligned primer ends. These misaligned primers can be extended by PolIV. Exhibits no 3'-5' exonuclease (proofreading) activity. May be involved in translesional synthesis, in conjunction with the beta clamp from PolIII. The sequence is that of DNA polymerase IV from Staphylococcus epidermidis (strain ATCC 35984 / DSM 28319 / BCRC 17069 / CCUG 31568 / BM 3577 / RP62A).